A 176-amino-acid polypeptide reads, in one-letter code: Inner membrane-spanning protein YciB (176 aa).

The next 5 helical transmembrane spans lie at 23 to 43 (MIAA…FLYW), 50 to 70 (TMQW…IVLG), 74 to 94 (FIMW…LGSH), 119 to 139 (LTYM…FVFT), and 150 to 170 (MFGS…YLST).

The protein belongs to the YciB family.

Its subcellular location is the cell inner membrane. Functionally, plays a role in cell envelope biogenesis, maintenance of cell envelope integrity and membrane homeostasis. This is Inner membrane-spanning protein YciB from Neisseria gonorrhoeae (strain ATCC 700825 / FA 1090).